The chain runs to 119 residues: Virulence protein VsdF (119 aa).

Functionally, expressed but non-essential protein, involved in the virulence of Salmonellas. The polypeptide is Virulence protein VsdF (vsdF) (Salmonella dublin).